The chain runs to 523 residues: 2-isopropylmalate synthase (523 aa).

The Pyruvate carboxyltransferase domain occupies Val-5–His-267. Asp-14, His-202, His-204, and Asn-238 together coordinate Mn(2+). Positions Glu-392–Val-523 are regulatory domain.

The protein belongs to the alpha-IPM synthase/homocitrate synthase family. LeuA type 1 subfamily. In terms of assembly, homodimer. Requires Mn(2+) as cofactor.

It localises to the cytoplasm. It catalyses the reaction 3-methyl-2-oxobutanoate + acetyl-CoA + H2O = (2S)-2-isopropylmalate + CoA + H(+). It functions in the pathway amino-acid biosynthesis; L-leucine biosynthesis; L-leucine from 3-methyl-2-oxobutanoate: step 1/4. Functionally, catalyzes the condensation of the acetyl group of acetyl-CoA with 3-methyl-2-oxobutanoate (2-ketoisovalerate) to form 3-carboxy-3-hydroxy-4-methylpentanoate (2-isopropylmalate). In Shewanella halifaxensis (strain HAW-EB4), this protein is 2-isopropylmalate synthase.